Consider the following 231-residue polypeptide: Ribosomal RNA small subunit methyltransferase G (231 aa).

Residues glycine 85, phenylalanine 90, and arginine 154 each coordinate S-adenosyl-L-methionine.

The protein belongs to the methyltransferase superfamily. RNA methyltransferase RsmG family.

It is found in the cytoplasm. It catalyses the reaction guanosine(527) in 16S rRNA + S-adenosyl-L-methionine = N(7)-methylguanosine(527) in 16S rRNA + S-adenosyl-L-homocysteine. Specifically methylates the N7 position of guanine in position 527 of 16S rRNA. This is Ribosomal RNA small subunit methyltransferase G from Rhodopseudomonas palustris (strain BisA53).